We begin with the raw amino-acid sequence, 699 residues long: Elongation factor G 2 (699 aa).

One can recognise a tr-type G domain in the interval 8-290; the sequence is ERYRNIGICA…AVIEYLPSPT (283 aa). GTP is bound by residues 17 to 24, 88 to 92, and 142 to 145; these read AHVDAGKT, DTPGH, and NKMD.

This sequence belongs to the TRAFAC class translation factor GTPase superfamily. Classic translation factor GTPase family. EF-G/EF-2 subfamily.

It is found in the cytoplasm. Functionally, catalyzes the GTP-dependent ribosomal translocation step during translation elongation. During this step, the ribosome changes from the pre-translocational (PRE) to the post-translocational (POST) state as the newly formed A-site-bound peptidyl-tRNA and P-site-bound deacylated tRNA move to the P and E sites, respectively. Catalyzes the coordinated movement of the two tRNA molecules, the mRNA and conformational changes in the ribosome. The sequence is that of Elongation factor G 2 from Colwellia psychrerythraea (strain 34H / ATCC BAA-681) (Vibrio psychroerythus).